We begin with the raw amino-acid sequence, 1133 residues long: Lon protease homolog, mitochondrial (1133 aa).

The N-terminal 37 residues, 1-37 (MLRTRTTKTLSTVARTTRAIQYYRSIAKTAAVSQRRF), are a transit peptide targeting the mitochondrion. A propeptide spans 38 to 98 (ASTLTVRDVE…ATNSGKSILA (61 aa)) (removed in mature form; by autocatalysis). Basic and acidic residues-rich tracts occupy residues 98–117 (AKDD…VPDE) and 125–143 (EPTR…EASK). 2 disordered regions span residues 98–176 (AKDD…KDVP) and 282–358 (ELFP…LDDI). Residues 145–166 (SRSSASGGGQSSSSRSDSGDGS) are compositionally biased toward low complexity. The Lon N-terminal domain maps to 182 to 480 (MLALPIARRP…KSLLVLKKEL (299 aa)). Basic and acidic residues-rich tracts occupy residues 282-301 (ELFP…KDTD) and 325-340 (KLED…SELQ). A compositionally biased stretch (acidic residues) spans 348–358 (TEEESEELDDI). Residue 632–639 (GPPGVGKT) participates in ATP binding. Positions 839–892 (KKLSIEDSPTSSADSKPKESVSSEEKAENNAKSSSEKTKDNNSEKTSDDIEALK) are dispensable for catalytic activity. The segment at 844 to 889 (EDSPTSSADSKPKESVSSEEKAENNAKSSSEKTKDNNSEKTSDDIE) is disordered. The span at 853 to 889 (SKPKESVSSEEKAENNAKSSSEKTKDNNSEKTSDDIE) shows a compositional bias: basic and acidic residues. One can recognise a Lon proteolytic domain in the interval 923–1109 (TTPPGVVMGL…NDIFQKLFKD (187 aa)). Active-site residues include Ser-1015 and Lys-1058.

This sequence belongs to the peptidase S16 family. As to quaternary structure, homohexamer. Organized in a ring with a central cavity. The ATP-binding and proteolytic domains (AP-domain) form a hexameric chamber. Oligomerization is independent of its proteolytic activity and the autocatalytic maturation of its subunits.

It localises to the mitochondrion matrix. The enzyme catalyses Hydrolysis of proteins in presence of ATP.. In terms of biological role, ATP-dependent serine protease that mediates the selective degradation of misfolded, unassembled or oxidatively damaged polypeptides as well as certain short-lived regulatory proteins in the mitochondrial matrix. May also have a chaperone function in the assembly of inner membrane protein complexes. Participates in the regulation of mitochondrial gene expression and in the maintenance of the integrity of the mitochondrial genome. Binds to mitochondrial DNA in a site-specific manner. Endogenous substrates include ABF2, ACO2, ILV1, ILV2, LSC1, LYS4, MGM101 and several oxidized proteins. The 2 nucleic acid-binding proteins ABF2 and MGM101 are protected from degradation by PIM1 when they are bound to DNA. This Saccharomyces cerevisiae (strain ATCC 204508 / S288c) (Baker's yeast) protein is Lon protease homolog, mitochondrial.